We begin with the raw amino-acid sequence, 335 residues long: Beta-ketoacyl-[acyl-carrier-protein] synthase III (335 aa).

Catalysis depends on residues cysteine 119 and histidine 261. The ACP-binding stretch occupies residues 262-266 (QANQR). The active site involves asparagine 291.

It belongs to the thiolase-like superfamily. FabH family. In terms of assembly, homodimer.

The protein resides in the cytoplasm. It catalyses the reaction malonyl-[ACP] + acetyl-CoA + H(+) = 3-oxobutanoyl-[ACP] + CO2 + CoA. It participates in lipid metabolism; fatty acid biosynthesis. Its function is as follows. Catalyzes the condensation reaction of fatty acid synthesis by the addition to an acyl acceptor of two carbons from malonyl-ACP. Catalyzes the first condensation reaction which initiates fatty acid synthesis and may therefore play a role in governing the total rate of fatty acid production. Possesses both acetoacetyl-ACP synthase and acetyl transacylase activities. Its substrate specificity determines the biosynthesis of branched-chain and/or straight-chain of fatty acids. This Prochlorococcus marinus (strain MIT 9515) protein is Beta-ketoacyl-[acyl-carrier-protein] synthase III.